A 337-amino-acid polypeptide reads, in one-letter code: Basic membrane protein A1 (337 aa).

Residues 1 to 17 (MNKLLLLILFECIIFLS) form the signal peptide. Cysteine 18 is lipidated: N-palmitoyl cysteine. Cysteine 18 carries S-diacylglycerol cysteine lipidation.

This sequence belongs to the BMP lipoprotein family. As to quaternary structure, monomer.

The protein resides in the cell inner membrane. Immunogenic protein. May be part of an ABC-type nucleoside uptake system involved in the purine salvage pathway. The sequence is that of Basic membrane protein A1 (bmpA1) from Borrelia garinii subsp. bavariensis (strain ATCC BAA-2496 / DSM 23469 / PBi) (Borreliella bavariensis).